We begin with the raw amino-acid sequence, 71 residues long: Peptide Ctri9819 (71 aa).

Residues 1–23 form the signal peptide; that stretch reads MKTVSTVAILAIFLLIVITTIET. The residue at position 34 (Leu-34) is a Leucine amide. Residues 38–71 constitute a propeptide that is removed on maturation; that stretch reads SKLETFKRIARTLSAGISAKRSLEDVNSLTGMSS.

It belongs to the non-disulfide-bridged peptide (NDBP) superfamily. Short antimicrobial peptide (group 4) family. As to expression, expressed by the venom gland.

The protein localises to the secreted. Functionally, antimicrobial peptide. The chain is Peptide Ctri9819 from Chaerilus tricostatus (Scorpion).